The following is a 493-amino-acid chain: Probable UTP--glucose-1-phosphate uridylyltransferase (493 aa).

UTP-binding positions include leucine 105–lysine 108, glutamine 181, glycine 211, and aspartate 242. Glycine 107–lysine 108 provides a ligand contact to substrate. Asparagine 240–aspartate 242 provides a ligand contact to substrate.

It belongs to the UDPGP type 1 family.

It carries out the reaction alpha-D-glucose 1-phosphate + UTP + H(+) = UDP-alpha-D-glucose + diphosphate. In terms of biological role, plays a central role as a glucosyl donor in cellular metabolic pathways. This chain is Probable UTP--glucose-1-phosphate uridylyltransferase, found in Saccharomyces cerevisiae (strain ATCC 204508 / S288c) (Baker's yeast).